A 407-amino-acid polypeptide reads, in one-letter code: Putative F-box protein At2g16220 (407 aa).

The region spanning methionine 1 to leucine 45 is the F-box domain. Residues proline 385 to isoleucine 407 form a disordered region. Residues glutamate 391–isoleucine 407 are compositionally biased toward acidic residues.

The chain is Putative F-box protein At2g16220 from Arabidopsis thaliana (Mouse-ear cress).